The sequence spans 229 residues: DNA repair protein RecO (229 aa).

The protein belongs to the RecO family.

In terms of biological role, involved in DNA repair and RecF pathway recombination. The sequence is that of DNA repair protein RecO from Pseudomonas fluorescens (strain ATCC BAA-477 / NRRL B-23932 / Pf-5).